We begin with the raw amino-acid sequence, 462 residues long: Retinoic acid receptor alpha (462 aa).

The interval 1 to 87 (MASNSSSCPT…PPPLPRIYKP (87 aa)) is modulating. Polar residues predominate over residues 52 to 64 (GYSTPSPATIETQ). The tract at residues 52-77 (GYSTPSPATIETQSSSSEEIVPSPPS) is disordered. The residue at position 77 (serine 77) is a Phosphoserine; by CDK7. 2 NR C4-type zinc fingers span residues 88–108 (CFVCQDKSSGYHYGVSACEGC) and 124–148 (CHRDKNCIINKVTRNRCQYCRLQKC). Positions 88–153 (CFVCQDKSSG…RLQKCFEVGM (66 aa)) form a DNA-binding region, nuclear receptor. The residue at position 96 (serine 96) is a Phosphoserine; by PKB/AKT1. The tract at residues 154–182 (SKESVRNDRNKKKKEVPKPECSESYTLTP) is hinge. Residues lysine 166 and lysine 171 each participate in a glycyl lysine isopeptide (Lys-Gly) (interchain with G-Cter in SUMO) cross-link. In terms of domain architecture, NR LBD spans 183–417 (EVGELIEKVR…PLIQEMLENS (235 aa)). Residue serine 219 is modified to Phosphoserine; by PKA. Cysteine 235 lines the all-trans-retinoate pocket. The short motif at 254 to 258 (IADQI) is the UBR5-degron element. Serine 287 is an all-trans-retinoate binding site. At serine 369 the chain carries Phosphoserine; by PKA. A Glycyl lysine isopeptide (Lys-Gly) (interchain with G-Cter in SUMO) cross-link involves residue lysine 399. The required for binding corepressor NCOR1 stretch occupies residues 404–419 (GSMPPLIQEMLENSEG). The 9aaTAD signature appears at 408–416 (PLIQEMLEN). Positions 419–462 (GLDTLSGQPGGGGRDGGGLAPPPGSCSPSLSPSSNRSSPATHSP) are disordered. A compositionally biased stretch (gly residues) spans 426 to 437 (QPGGGGRDGGGL). Residues 444–462 (CSPSLSPSSNRSSPATHSP) are compositionally biased toward low complexity.

This sequence belongs to the nuclear hormone receptor family. NR1 subfamily. In terms of assembly, heterodimer; with RXRA (via C-terminus); association with RXRA is enhanced by pulsatile shear stress. Binds DNA preferentially as a heterodimer. RXRA serves as enhancer to induce RARA binding to RARE. Interacts with RXRG. Interacts with coactivators NCOA3 and NCOA6. Interacts with NCOA7; the interaction requires ligand-binding. Interacts (via the ligand-binding domain) with PRAME; the interaction is ligand (retinoic acid)-dependent. Interacts with AKT1; the interaction phosphorylates RARA and represses transactivation. Interacts with PRKAR1A; the interaction negatively regulates RARA transcriptional activity. Interacts with NCOR1 and NCOR2. Interacts with PRMT2. Interacts with LRIF1. Interacts with ASXL1 and NCOA1. Interacts with ACTN4. In a complex with HDAC3, HDAC5 and HDAC7; the HDACs serve as corepressors of RARA, causing its deacetylation and inhibition of RARE DNA element binding; association with HDAC3, HDAC5 and HDAC7 is increased upon oscillatory shear stress. Interacts with CDK7. In the absence of hormonal ligand, interacts with TACC1. Phosphorylated on serine and threonine residues. Phosphorylation does not change during cell cycle. Phosphorylation on Ser-77 is crucial for transcriptional activity. Phosphorylation by AKT1 is required for the repressor activity but has no effect on DNA binding, protein stability nor subcellular localization. Phosphorylated by PKA in vitro. This phosphorylation on Ser-219 and Ser-369 is critical for ligand binding, nuclear localization and transcriptional activity in response to FSH signaling. In terms of processing, sumoylated with SUMO2, mainly on Lys-399 which is also required for SENP6 binding. On all-trans retinoic acid (ATRA) binding, a conformational change may occur that allows sumoylation on two additional site, Lys-166 and Lys-171. Probably desumoylated by SENP6. Sumoylation levels determine nuclear localization and regulate ATRA-mediated transcriptional activity. Post-translationally, trimethylation enhances heterodimerization with RXRA and positively modulates the transcriptional activation. Ubiquitinated by UBR5, leading to its degradation: UBR5 specifically recognizes and binds ligand-bound RARA when it is not associated with coactivators (NCOAs). In presence of NCOAs, the UBR5-degron is not accessible, preventing its ubiquitination and degradation. In terms of processing, acetylated; acetylation is increased upon pulsatile shear stress and decreased upon oscillatory shear stress. Expressed in monocytes.

The protein localises to the nucleus. It localises to the cytoplasm. Receptor for retinoic acid. Retinoic acid receptors bind as heterodimers to their target response elements in response to their ligands, all-trans or 9-cis retinoic acid, and regulate gene expression in various biological processes. The RXR/RAR heterodimers bind to the retinoic acid response elements (RARE) composed of tandem 5'-AGGTCA-3' sites known as DR1-DR5. In the absence of ligand, the RXR-RAR heterodimers associate with a multiprotein complex containing transcription corepressors that induce histone deacetylation, chromatin condensation and transcriptional suppression. On ligand binding, the corepressors dissociate from the receptors and associate with the coactivators leading to transcriptional activation. Formation of a complex with histone deacetylases might lead to inhibition of RARE DNA element binding and to transcriptional repression. Transcriptional activation and RARE DNA element binding might be supported by the transcription factor KLF2. RARA plays an essential role in the regulation of retinoic acid-induced germ cell development during spermatogenesis. Has a role in the survival of early spermatocytes at the beginning prophase of meiosis. In Sertoli cells, may promote the survival and development of early meiotic prophase spermatocytes. In concert with RARG, required for skeletal growth, matrix homeostasis and growth plate function. Together with RXRA, positively regulates microRNA-10a expression, thereby inhibiting the GATA6/VCAM1 signaling response to pulsatile shear stress in vascular endothelial cells. In association with HDAC3, HDAC5 and HDAC7 corepressors, plays a role in the repression of microRNA-10a and thereby promotes the inflammatory response. The polypeptide is Retinoic acid receptor alpha (RARA) (Homo sapiens (Human)).